The sequence spans 277 residues: UBX domain-containing protein 10 (277 aa).

Residues 1 to 102 (MAIEAPVNFA…APDEMPELLL (102 aa)) are disordered. Residues 16–31 (TVVSTAGDSSTWQPSS) show a composition bias toward polar residues. Residues 35–50 (HVIRPKSAKGRKRPNL) show a composition bias toward basic residues. Residues 60 to 77 (SPSALSSSPPPRSSGSPS) are compositionally biased toward low complexity. The residue at position 88 (S88) is a Phosphoserine. One can recognise a UBX domain in the interval 191 to 268 (DEEPRLLLAV…GILHKSVLGI (78 aa)).

Belongs to the UBXN10 family. As to quaternary structure, interacts with CLUAP1; the interaction is direct and mediates interaction with the intraflagellar transport complex B (IFT-B). Interacts with VCP; the interaction is direct.

Its subcellular location is the cell projection. The protein resides in the cilium. Functionally, VCP/p97-binding protein required for ciliogenesis. Acts as a tethering factor that facilitates recruitment of VCP/p97 to the intraflagellar transport complex B (IFT-B) in cilia. UBX domain-containing proteins act as tethering factors for VCP/p97 and may specify substrate specificity of VCP/p97. The polypeptide is UBX domain-containing protein 10 (Mus musculus (Mouse)).